The following is a 2204-amino-acid chain: Non-reducing polyketide synthase CTB1 (2204 aa).

Residues Ala11 to His250 are N-terminal acylcarrier protein transacylase domain (SAT). Residues Lys382 to Asp815 form the Ketosynthase family 3 (KS3) domain. Residues Cys554, His689, and His734 each act as for beta-ketoacyl synthase activity in the active site. Residues Ala923–Lys1224 form a malonyl-CoA:ACP transacylase (MAT) domain region. The product template (PT) domain stretch occupies residues Ser1299–Val1619. The tract at residues His1303–Lys1439 is N-terminal hotdog fold. The PKS/mFAS DH domain maps to His1303–His1616. The active-site Proton acceptor; for dehydratase activity is His1336. The interval Thr1468–His1616 is C-terminal hotdog fold. Residue Asp1528 is the Proton donor; for dehydratase activity of the active site. Positions Lys1625–Lys1674 are disordered. Residues Thr1631–Ala1644 are compositionally biased toward basic and acidic residues. Carrier domains are found at residues Pro1679–Ser1756 and Asp1783–Thr1865. 2 positions are modified to O-(pantetheine 4'-phosphoryl)serine: Ser1716 and Ser1824. Polar residues predominate over residues Ser1864–Pro1875. The tract at residues Ser1864–Trp1931 is disordered. Low complexity predominate over residues Ala1880–Ser1895. The segment at Ile1945–Met2195 is thioesterase (TE) domain.

The cofactor is pantetheine 4'-phosphate.

The enzyme catalyses 6 malonyl-CoA + acetyl-CoA + 6 H(+) = nor-toralactone + 6 CO2 + 7 CoA + 2 H2O. The protein operates within mycotoxin biosynthesis. Functionally, polyketide synthase; part of the gene cluster that mediates the biosynthesis of cercosporin, a light-activated, non-host-selective toxin. The perylenequinone chromophore of cercosporin absorbs light energy to attain an electronically-activated triplet state and produces active oxygen species such as the hydroxyl radical, superoxide, hydrogen peroxide or singlet oxygen upon reaction with oxygen molecules. These reactive oxygen species cause damage to various cellular components including lipids, proteins and nucleic acids. The first step of cercosporin biosynthesis is performed by the polyketide synthase CTB1 which catalyzes the formation of nor-toralactone. The starter unit acyltransferase (SAT) domain of CTB1 initiates polyketide extension by the selective utilization of acetyl-CoA, which is elongated to the heptaketide in the beta-ketoacyl synthase (KS) domain by successive condensations with six malonyl units introduced by the malonyl acyltransferase (MAT) domain. The product template (PT) domain catalyzes C4-C9 and C2-C11 aldol cyclizations and dehydrations to a trihydroxynaphthalene, which is thought to be delivered to the thioesterase (TE) domain for product release. The bifunctional enzyme CTB3 then methylates nor-toralactone to toralactone before conducting an unusual oxidative aromatic ring opening. The O-methyltransferase CTB2 further methylates the nascent OH-6 of the CBT3 product, blocking further oxidation at this site before the reductase CTB6 reduces the 2-oxopropyl ketone at position C7, giving naphthalene. The FAD-dependent monooxygenase CTB5 in concert with the multicopper oxidase CTB12 are responsible for homodimerization of naphthalene with CTB7 installing the dioxepine moiety, finally producing cercosporin. The fasciclin domain-containing protein CTB11 might act with CTB5 and CTB12 whereas the roles of CTB9 and CTB10 have still to be elucidated. This Cercospora beticola (Sugarbeet leaf spot fungus) protein is Non-reducing polyketide synthase CTB1.